Here is a 357-residue protein sequence, read N- to C-terminus: Iron deficiency-induced protein A (357 aa).

Residues methionine 1 to alanine 36 constitute a signal peptide (tat-type signal). Histidine 48, tyrosine 49, tyrosine 182, tyrosine 238, and tyrosine 239 together coordinate Fe cation.

It belongs to the bacterial solute-binding protein 1 family. Post-translationally, predicted to be exported by the Tat system. The position of the signal peptide cleavage has not been experimentally proven.

The protein localises to the cellular thylakoid membrane. In terms of biological role, plays an important role in protecting the acceptor side of photosystem II (PSII) against oxidative damage, especially under iron-limiting growth conditions. Its function is as follows. May also be part of a periplasmic ABC transporter complex involved in iron import. The chain is Iron deficiency-induced protein A (idiA) from Synechococcus elongatus (strain ATCC 33912 / PCC 7942 / FACHB-805) (Anacystis nidulans R2).